The following is a 1464-amino-acid chain: Nuclear pore complex protein NUP155 (1464 aa).

An N-acetylserine modification is found at Ser-2.

It belongs to the non-repetitive/WGA-negative nucleoporin family. As to quaternary structure, part of the nuclear pore complex (NPC). The NPC has an eight-fold symmetrical structure comprising a central transport channel and two rings, the cytoplasmic and nuclear rings, to which eight filaments are attached. The cytoplasmic filaments have loose ends, while the nuclear filaments are joined in a distal ring, forming a nuclear basket. NPCs are highly dynamic in configuration and composition, and can be devided in 3 subcomplexes, the NUP62 subcomplex, the NUP107-160 subcomplex and the NUP93 subcomplex, containing approximately 30 different nucleoporin proteins.

It is found in the nucleus. Its subcellular location is the nuclear pore complex. Its function is as follows. Major component of the nuclear pore complex (NPC). The chain is Nuclear pore complex protein NUP155 from Arabidopsis thaliana (Mouse-ear cress).